A 251-amino-acid polypeptide reads, in one-letter code: MSDYVYNLVKKHHSVRKFKNKPLSEDVVKKLVEAGQSASTSSFLQAYSIIGIDDEKIKENLREVSGQPYVVENGYLFVFVIDYYRHHLVDQHAETDMENAYGSTEGLLVGAIDAALVAENIAVTAEDMGYGIVFLGSLRNDVERVREILDLPDYVFPVFGMAVGEPADDENGAAKPRLPFDHVFHHNKYHADKETQYAQMADYDQTISEYYDQRTNGNRKETWSQQIEMFLGNKARLDMLEQLQKSGLIQR.

This sequence belongs to the flavin oxidoreductase frp family. Requires FMN as cofactor.

In terms of biological role, reduces FMN, organic nitro compounds and disulfide DTNB. Involved in maintenance of the cellular redox state and the disulfide stress response. The polypeptide is NADPH-dependent oxidoreductase (nfrA) (Staphylococcus aureus (strain Mu50 / ATCC 700699)).